The following is a 361-amino-acid chain: Chorismate synthase (361 aa).

NADP(+)-binding residues include Arg-48 and Arg-54. Residues 125 to 127, 238 to 239, Gly-278, 293 to 297, and Arg-319 each bind FMN; these read RSS, NA, and KPTSS.

The protein belongs to the chorismate synthase family. In terms of assembly, homotetramer. The cofactor is FMNH2.

It catalyses the reaction 5-O-(1-carboxyvinyl)-3-phosphoshikimate = chorismate + phosphate. It participates in metabolic intermediate biosynthesis; chorismate biosynthesis; chorismate from D-erythrose 4-phosphate and phosphoenolpyruvate: step 7/7. Its function is as follows. Catalyzes the anti-1,4-elimination of the C-3 phosphate and the C-6 proR hydrogen from 5-enolpyruvylshikimate-3-phosphate (EPSP) to yield chorismate, which is the branch point compound that serves as the starting substrate for the three terminal pathways of aromatic amino acid biosynthesis. This reaction introduces a second double bond into the aromatic ring system. This chain is Chorismate synthase, found in Pectobacterium carotovorum subsp. carotovorum (strain PC1).